Consider the following 155-residue polypeptide: Ribosomal RNA large subunit methyltransferase H (155 aa).

An S-adenosyl-L-methionine-binding site is contributed by glycine 103.

This sequence belongs to the RNA methyltransferase RlmH family. As to quaternary structure, homodimer.

It localises to the cytoplasm. The enzyme catalyses pseudouridine(1915) in 23S rRNA + S-adenosyl-L-methionine = N(3)-methylpseudouridine(1915) in 23S rRNA + S-adenosyl-L-homocysteine + H(+). Functionally, specifically methylates the pseudouridine at position 1915 (m3Psi1915) in 23S rRNA. This Caulobacter vibrioides (strain ATCC 19089 / CIP 103742 / CB 15) (Caulobacter crescentus) protein is Ribosomal RNA large subunit methyltransferase H.